The primary structure comprises 80 residues: Exodeoxyribonuclease 7 small subunit (80 aa).

The protein belongs to the XseB family. Heterooligomer composed of large and small subunits.

The protein localises to the cytoplasm. It carries out the reaction Exonucleolytic cleavage in either 5'- to 3'- or 3'- to 5'-direction to yield nucleoside 5'-phosphates.. Bidirectionally degrades single-stranded DNA into large acid-insoluble oligonucleotides, which are then degraded further into small acid-soluble oligonucleotides. The protein is Exodeoxyribonuclease 7 small subunit of Cronobacter sakazakii (strain ATCC BAA-894) (Enterobacter sakazakii).